The chain runs to 439 residues: Adenylosuccinate synthetase (439 aa).

GTP is bound by residues G25 to K31, G53 to T55, and K62. D26 functions as the Proton acceptor in the catalytic mechanism. The Mg(2+) site is built by D26 and G53. IMP is bound by residues D26 to K29 and N51 to H54. Residue H54 is the Proton donor of the active site. The IMP site is built by T141, R155, N232, and T247. A GTP-binding site is contributed by T307. Residue T307–R313 participates in substrate binding. Residue R311 coordinates IMP. GTP-binding positions include R313, K339–D341, and G425–G427.

The protein belongs to the adenylosuccinate synthetase family. Homodimer. Mg(2+) is required as a cofactor.

The protein resides in the cytoplasm. It carries out the reaction IMP + L-aspartate + GTP = N(6)-(1,2-dicarboxyethyl)-AMP + GDP + phosphate + 2 H(+). It functions in the pathway purine metabolism; AMP biosynthesis via de novo pathway; AMP from IMP: step 1/2. Plays an important role in the salvage pathway for purine nucleotide biosynthesis. Catalyzes the first commited step in the biosynthesis of AMP from IMP. The protein is Adenylosuccinate synthetase of Plasmodium chabaudi chabaudi.